The primary structure comprises 372 residues: MTVLVALFCLVTWTLCTRIPQYSTQGTQQPQQPEKTPHPHPQPEDAFPPTHATDLKIHDPSIIHVDGTYYSYSVGRHIRIHQAPSLDGPWERTGAVLNADSVIPKGDRKAPWAPQTVHHNDTYYCFYAVSNSGCRDSAIGVATSKSPGPGGWTDHGLLVQSGTGKGSDEHPFTSSNTIDPSVFVGEDGHGYLTFGSFWSGIWQVPLDESLLSVAGDTSSEARQLVYMEKAPLPASKHPNPLCREPSGARPIEGSFLSYHEPWYYLWFSYGKCCKFDTKNLPPPGREYSIRVGRSKSPRGPFVDKQGRDLANGGGEIVYASNRDVYAPGGQGVLTEKSGDILYYHYCRYPVIQEIEVDADLTVNKSTSYDFWV.

The first 16 residues, 1-16 (MTVLVALFCLVTWTLC), serve as a signal peptide directing secretion. Residues 23–34 (STQGTQQPQQPE) show a composition bias toward low complexity. The interval 23-52 (STQGTQQPQQPEKTPHPHPQPEDAFPPTHA) is disordered. Aspartate 59 acts as the Proton acceptor in catalysis. The N-linked (GlcNAc...) asparagine glycan is linked to asparagine 120. The Proton donor role is filled by glutamate 252. N-linked (GlcNAc...) asparagine glycosylation occurs at asparagine 363.

Belongs to the glycosyl hydrolase 43 family.

It is found in the secreted. It carries out the reaction Endohydrolysis of (1-&gt;5)-alpha-arabinofuranosidic linkages in (1-&gt;5)-arabinans.. Its pathway is glycan metabolism; L-arabinan degradation. Its function is as follows. Endo-1,5-alpha-L-arabinanase involved in degradation of pectin. Its preferred substrate is linear 1,5-alpha-L-arabinan. This chain is Probable arabinan endo-1,5-alpha-L-arabinosidase B (abnB), found in Aspergillus fumigatus (strain ATCC MYA-4609 / CBS 101355 / FGSC A1100 / Af293) (Neosartorya fumigata).